A 469-amino-acid chain; its full sequence is Glutamate--tRNA ligase (469 aa).

Residues 9-19 carry the 'HIGH' region motif; sequence PSPTGFLHVGG. Positions 236 to 240 match the 'KMSKS' region motif; the sequence is KLSKR. Residue Lys239 participates in ATP binding.

Belongs to the class-I aminoacyl-tRNA synthetase family. Glutamate--tRNA ligase type 1 subfamily. In terms of assembly, monomer.

Its subcellular location is the cytoplasm. The catalysed reaction is tRNA(Glu) + L-glutamate + ATP = L-glutamyl-tRNA(Glu) + AMP + diphosphate. Its function is as follows. Catalyzes the attachment of glutamate to tRNA(Glu) in a two-step reaction: glutamate is first activated by ATP to form Glu-AMP and then transferred to the acceptor end of tRNA(Glu). The sequence is that of Glutamate--tRNA ligase from Pseudoalteromonas atlantica (strain T6c / ATCC BAA-1087).